The chain runs to 97 residues: MNAERKYLVLLAPVISEKSTMVQQQANQFVFKVARDATKREIRSAVEKLFEVQVLSVQTCNYLGKEKRVGRHVGRRSSWKKAYVRLAEGSSIDYGVA.

It belongs to the universal ribosomal protein uL23 family. In terms of assembly, part of the 50S ribosomal subunit. Contacts protein L29, and trigger factor when it is bound to the ribosome.

Its function is as follows. One of the early assembly proteins it binds 23S rRNA. One of the proteins that surrounds the polypeptide exit tunnel on the outside of the ribosome. Forms the main docking site for trigger factor binding to the ribosome. The protein is Large ribosomal subunit protein uL23 of Acidithiobacillus ferrooxidans (strain ATCC 23270 / DSM 14882 / CIP 104768 / NCIMB 8455) (Ferrobacillus ferrooxidans (strain ATCC 23270)).